Consider the following 612-residue polypeptide: Serine/threonine-protein kinase Nek1 (612 aa).

Residues 4–258 (YEFLEQIGKG…ASDLLRHPHL (255 aa)) enclose the Protein kinase domain. Residues 10-18 (IGKGSFGSA) and K33 each bind ATP. D129 (proton acceptor) is an active-site residue. Residues 503-513 (ISDGSSSSDQN) are compositionally biased toward polar residues. The interval 503–534 (ISDGSSSSDQNATAGASSHTTSSSSRRCRFDP) is disordered. Residues 514–527 (ATAGASSHTTSSSS) show a composition bias toward low complexity.

The protein belongs to the protein kinase superfamily. NEK Ser/Thr protein kinase family. NIMA subfamily.

The catalysed reaction is L-seryl-[protein] + ATP = O-phospho-L-seryl-[protein] + ADP + H(+). It catalyses the reaction L-threonyl-[protein] + ATP = O-phospho-L-threonyl-[protein] + ADP + H(+). In terms of biological role, may be involved in plant development processes. The polypeptide is Serine/threonine-protein kinase Nek1 (NEK1) (Arabidopsis thaliana (Mouse-ear cress)).